Here is a 291-residue protein sequence, read N- to C-terminus: Pyridoxal kinase PdxY (291 aa).

Substrate is bound by residues serine 9 and 44–45 (TQ). Residues aspartate 112, valine 144, glutamate 149, lysine 182, and 207 to 210 (RPHL) each bind ATP. Aspartate 221 contributes to the substrate binding site.

Belongs to the pyridoxine kinase family. PdxY subfamily. In terms of assembly, homodimer. The cofactor is Mg(2+).

It carries out the reaction pyridoxal + ATP = pyridoxal 5'-phosphate + ADP + H(+). It functions in the pathway cofactor metabolism; pyridoxal 5'-phosphate salvage; pyridoxal 5'-phosphate from pyridoxal: step 1/1. Functionally, pyridoxal kinase involved in the salvage pathway of pyridoxal 5'-phosphate (PLP). Catalyzes the phosphorylation of pyridoxal to PLP. The sequence is that of Pyridoxal kinase PdxY from Photobacterium profundum (strain SS9).